The primary structure comprises 280 residues: Cell division protein SepF (280 aa).

The interval 22–117 (DYVDDRAPRA…DDYPEDAYGE (96 aa)) is disordered. Basic and acidic residues-rich tracts occupy residues 25 to 36 (DDRAPRASERGG) and 53 to 83 (RYGE…GADR).

This sequence belongs to the SepF family. As to quaternary structure, homodimer. Interacts with FtsZ.

Its subcellular location is the cytoplasm. Cell division protein that is part of the divisome complex and is recruited early to the Z-ring. Probably stimulates Z-ring formation, perhaps through the cross-linking of FtsZ protofilaments. Its function overlaps with FtsA. In Nocardia farcinica (strain IFM 10152), this protein is Cell division protein SepF.